Consider the following 22-residue polypeptide: GLWEKIKEKASELVSGIVEGVK.

Residue Lys22 is modified to Lysine amide.

As to expression, expressed by the skin parotoid and/or rostral glands.

It is found in the secreted. In terms of biological role, antibacterial peptide, that adopts an alpha helical conformation which can disrupt bacterial membranes. Each caerin displays a different antimicrobial specificity. The polypeptide is Caerin-3.2 (Ranoidea caerulea (Green tree frog)).